The following is a 350-amino-acid chain: tRNA uridine(34) hydroxylase (350 aa).

The region spanning aspartate 146–leucine 240 is the Rhodanese domain. The active-site Cysteine persulfide intermediate is the cysteine 200.

The protein belongs to the TrhO family.

The enzyme catalyses uridine(34) in tRNA + AH2 + O2 = 5-hydroxyuridine(34) in tRNA + A + H2O. Catalyzes oxygen-dependent 5-hydroxyuridine (ho5U) modification at position 34 in tRNAs, the first step in 5-carboxymethoxyuridine (cmo5U) biosynthesis. May be part of an alternate pathway, which is able to bypass cmo5U biogenesis in a subset of tRNAs under aerobic conditions. The polypeptide is tRNA uridine(34) hydroxylase (Escherichia coli (strain SE11)).